The chain runs to 234 residues: Geranylgeranylglyceryl phosphate synthase (234 aa).

Positions 24 and 52 each coordinate Mg(2+). Sn-glycerol 1-phosphate is bound by residues 172–178, 203–204, and 225–226; these read YLEAGSG, GG, and GT.

The protein belongs to the GGGP/HepGP synthase family. Group II subfamily. As to quaternary structure, homodimer. The cofactor is Mg(2+).

The catalysed reaction is sn-glycerol 1-phosphate + (2E,6E,10E)-geranylgeranyl diphosphate = sn-3-O-(geranylgeranyl)glycerol 1-phosphate + diphosphate. In terms of biological role, prenyltransferase that catalyzes the transfer of the geranylgeranyl moiety of geranylgeranyl diphosphate (GGPP) to the C3 hydroxyl of sn-glycerol-1-phosphate (G1P). In Zunongwangia profunda (strain DSM 18752 / CCTCC AB 206139 / SM-A87) (Wangia profunda), this protein is Geranylgeranylglyceryl phosphate synthase.